We begin with the raw amino-acid sequence, 276 residues long: Shikimate dehydrogenase (NADP(+)) (276 aa).

Shikimate is bound by residues 15 to 17 (SKS) and threonine 62. Lysine 66 acts as the Proton acceptor in catalysis. Glutamate 78 serves as a coordination point for NADP(+). Positions 87 and 103 each coordinate shikimate. NADP(+) contacts are provided by residues 128-132 (GAGGA) and isoleucine 217. Tyrosine 219 lines the shikimate pocket. Residue glycine 240 coordinates NADP(+).

This sequence belongs to the shikimate dehydrogenase family. Homodimer.

The enzyme catalyses shikimate + NADP(+) = 3-dehydroshikimate + NADPH + H(+). The protein operates within metabolic intermediate biosynthesis; chorismate biosynthesis; chorismate from D-erythrose 4-phosphate and phosphoenolpyruvate: step 4/7. In terms of biological role, involved in the biosynthesis of the chorismate, which leads to the biosynthesis of aromatic amino acids. Catalyzes the reversible NADPH linked reduction of 3-dehydroshikimate (DHSA) to yield shikimate (SA). The sequence is that of Shikimate dehydrogenase (NADP(+)) from Lysinibacillus sphaericus (strain C3-41).